Here is an 89-residue protein sequence, read N- to C-terminus: Small ribosomal subunit protein bS16 (89 aa).

The protein belongs to the bacterial ribosomal protein bS16 family.

This is Small ribosomal subunit protein bS16 from Chloroflexus aurantiacus (strain ATCC 29364 / DSM 637 / Y-400-fl).